A 534-amino-acid chain; its full sequence is CTP synthase (534 aa).

The amidoligase domain stretch occupies residues 1–267 (MTKYIFVTGG…GDLIIERLAL (267 aa)). Ser13 contacts CTP. Ser13 contributes to the UTP binding site. ATP is bound at residue 14–19 (SVGKGI). Tyr54 is an L-glutamine binding site. Residue Asp71 coordinates ATP. Mg(2+)-binding residues include Asp71 and Glu141. CTP-binding positions include 148–150 (DIE), 188–193 (KTKPTQ), and Lys224. UTP contacts are provided by residues 188-193 (KTKPTQ) and Lys224. Positions 292-534 (TVAIVGKYVE…VQAALEQIAE (243 aa)) constitute a Glutamine amidotransferase type-1 domain. Residue Gly354 participates in L-glutamine binding. Cys381 acts as the Nucleophile; for glutamine hydrolysis in catalysis. L-glutamine contacts are provided by residues 382–385 (LGMQ), Glu405, and Arg462. Residues His507 and Glu509 contribute to the active site.

This sequence belongs to the CTP synthase family. Homotetramer.

The catalysed reaction is UTP + L-glutamine + ATP + H2O = CTP + L-glutamate + ADP + phosphate + 2 H(+). The enzyme catalyses L-glutamine + H2O = L-glutamate + NH4(+). It catalyses the reaction UTP + NH4(+) + ATP = CTP + ADP + phosphate + 2 H(+). It participates in pyrimidine metabolism; CTP biosynthesis via de novo pathway; CTP from UDP: step 2/2. With respect to regulation, allosterically activated by GTP, when glutamine is the substrate; GTP has no effect on the reaction when ammonia is the substrate. The allosteric effector GTP functions by stabilizing the protein conformation that binds the tetrahedral intermediate(s) formed during glutamine hydrolysis. Inhibited by the product CTP, via allosteric rather than competitive inhibition. In terms of biological role, catalyzes the ATP-dependent amination of UTP to CTP with either L-glutamine or ammonia as the source of nitrogen. Regulates intracellular CTP levels through interactions with the four ribonucleotide triphosphates. This is CTP synthase from Herpetosiphon aurantiacus (strain ATCC 23779 / DSM 785 / 114-95).